The primary structure comprises 913 residues: Valine--tRNA ligase (913 aa).

The 'HIGH' region motif lies at 49–59 (PNVTGNLHLGH). A 'KMSKS' region motif is present at residues 544–548 (KMSKS). An ATP-binding site is contributed by K547. Positions 851–912 (DWVKKQQKRL…ERLEGVLAQL (62 aa)) form a coiled coil.

It belongs to the class-I aminoacyl-tRNA synthetase family. ValS type 1 subfamily. As to quaternary structure, monomer.

The protein localises to the cytoplasm. The catalysed reaction is tRNA(Val) + L-valine + ATP = L-valyl-tRNA(Val) + AMP + diphosphate. In terms of biological role, catalyzes the attachment of valine to tRNA(Val). As ValRS can inadvertently accommodate and process structurally similar amino acids such as threonine, to avoid such errors, it has a 'posttransfer' editing activity that hydrolyzes mischarged Thr-tRNA(Val) in a tRNA-dependent manner. This Deinococcus radiodurans (strain ATCC 13939 / DSM 20539 / JCM 16871 / CCUG 27074 / LMG 4051 / NBRC 15346 / NCIMB 9279 / VKM B-1422 / R1) protein is Valine--tRNA ligase.